The following is a 161-amino-acid chain: Large ribosomal subunit protein uL15 (161 aa).

The tract at residues Met1–Gly43 is disordered. Gly residues predominate over residues Arg21–Gly37.

Part of the 50S ribosomal subunit.

Binds to the 23S rRNA. The sequence is that of Large ribosomal subunit protein uL15 from Rhodopseudomonas palustris (strain ATCC BAA-98 / CGA009).